Here is a 333-residue protein sequence, read N- to C-terminus: Fibronectin type III domain-containing protein 11 (333 aa).

Positions proline 212–glycine 310 constitute a Fibronectin type-III domain. The interval threonine 307–arginine 333 is disordered.

The protein is Fibronectin type III domain-containing protein 11 of Bos taurus (Bovine).